The sequence spans 637 residues: 1-deoxy-D-xylulose-5-phosphate synthase (637 aa).

Residues H72 and 113-115 contribute to the thiamine diphosphate site; that span reads GHA. D144 contacts Mg(2+). Residues 145–146, N174, Y287, and E370 each bind thiamine diphosphate; that span reads GA. N174 lines the Mg(2+) pocket.

This sequence belongs to the transketolase family. DXPS subfamily. Homodimer. The cofactor is Mg(2+). Requires thiamine diphosphate as cofactor.

It catalyses the reaction D-glyceraldehyde 3-phosphate + pyruvate + H(+) = 1-deoxy-D-xylulose 5-phosphate + CO2. The protein operates within metabolic intermediate biosynthesis; 1-deoxy-D-xylulose 5-phosphate biosynthesis; 1-deoxy-D-xylulose 5-phosphate from D-glyceraldehyde 3-phosphate and pyruvate: step 1/1. Catalyzes the acyloin condensation reaction between C atoms 2 and 3 of pyruvate and glyceraldehyde 3-phosphate to yield 1-deoxy-D-xylulose-5-phosphate (DXP). This Prochlorococcus marinus subsp. pastoris (strain CCMP1986 / NIES-2087 / MED4) protein is 1-deoxy-D-xylulose-5-phosphate synthase.